The primary structure comprises 119 residues: NAD(P)H-quinone oxidoreductase subunit M (119 aa).

Belongs to the complex I NdhM subunit family. In terms of assembly, NDH-1 can be composed of about 15 different subunits; different subcomplexes with different compositions have been identified which probably have different functions.

The protein resides in the cellular thylakoid membrane. The enzyme catalyses a plastoquinone + NADH + (n+1) H(+)(in) = a plastoquinol + NAD(+) + n H(+)(out). The catalysed reaction is a plastoquinone + NADPH + (n+1) H(+)(in) = a plastoquinol + NADP(+) + n H(+)(out). Its function is as follows. NDH-1 shuttles electrons from an unknown electron donor, via FMN and iron-sulfur (Fe-S) centers, to quinones in the respiratory and/or the photosynthetic chain. The immediate electron acceptor for the enzyme in this species is believed to be plastoquinone. Couples the redox reaction to proton translocation, and thus conserves the redox energy in a proton gradient. Cyanobacterial NDH-1 also plays a role in inorganic carbon-concentration. This is NAD(P)H-quinone oxidoreductase subunit M from Crocosphaera subtropica (strain ATCC 51142 / BH68) (Cyanothece sp. (strain ATCC 51142)).